A 655-amino-acid chain; its full sequence is p-hydroxybenzoic acid efflux pump subunit AaeB (655 aa).

The next 11 helical transmembrane spans lie at 13–33, 38–58, 69–89, 93–113, 121–141, 152–172, 370–390, 407–427, 431–451, 459–479, and 482–502; these read FAVKLACAIVLALFIGFHFQL, WAVLTAAIVAAGPAFAAGGEP, LRIIGTFIGCIAALIIIISMI, LLMILVCCVWAGFCTWISSLV, WGLSGYTALIIVITIQTEPLL, EIVIGIGCAILADLLFSPRSI, LFWLWTGWTSGNGAMVMIAVV, FIYGTLAALPLGLLYFLVIIP, QSMLLLCLSLAVLGFFIGIEV, MGALASTINIIVLDNPMTFHF, and FLDSALGQIVGCMLAFIVILL.

Belongs to the aromatic acid exporter ArAE (TC 2.A.85) family.

It localises to the cell inner membrane. In terms of biological role, forms an efflux pump with AaeA. Could function as a metabolic relief valve, allowing to eliminate certain compounds when they accumulate to high levels in the cell. The chain is p-hydroxybenzoic acid efflux pump subunit AaeB from Salmonella arizonae (strain ATCC BAA-731 / CDC346-86 / RSK2980).